The sequence spans 503 residues: Transmembrane prolyl 4-hydroxylase (503 aa).

Positions 1–49 (MAAAVATVQRPEAETVEEASNLQWPLPPEHRPSGAATRPGDSEDAPVRP) are disordered. The Cytoplasmic segment spans residues 1-61 (MAAAVATVQR…KPRGICSRAY (61 aa)). A helical; Signal-anchor for type II membrane protein transmembrane segment spans residues 62 to 82 (FLVLMVFVHLYLGNVLALLLF). Over 83 to 503 (VHYSNGDEST…RAYSDARVEL (421 aa)) the chain is Lumenal. The segment at 90–110 (ESTDPGPQRREQSPQPVPTLG) is disordered. EF-hand domains are found at residues 186–221 (AMQVSQLDLFQLLDQNHDGRLQLREVLAQTRLGNGR) and 225–260 (PENIQEMYSAIKADPDGDGVLSLQEFSNMDLRDFHK). Ca(2+) is bound by residues Asp199, Asn201, Asp203, Arg205, Glu210, Asp238, Asp240, Asp242, and Glu249. A Fe2OG dioxygenase domain is found at 310–461 (EFSEPLQVVR…KWIANNWINV (152 aa)). Fe cation-binding residues include His329 and Asp331. 2 N-linked (GlcNAc...) asparagine glycosylation sites follow: Asn349 and Asn369. Glu375 is a Fe cation binding site. A glycan (N-linked (GlcNAc...) asparagine) is linked at Asn383. 2-oxoglutarate is bound at residue Lys452.

In terms of assembly, homodimer. Fe(2+) is required as a cofactor. Requires L-ascorbate as cofactor. Glycosylated. As to expression, highest expression levels are detected in the eye and brain, especially in the retinal epithelium cells and cortical neurons. Also expressed in skeletal muscle, lung, heart, adrenal gland, kidney, prostate, thyroid and testis.

The protein localises to the endoplasmic reticulum membrane. The catalysed reaction is L-prolyl-[hypoxia-inducible factor alpha subunit] + 2-oxoglutarate + O2 = trans-4-hydroxy-L-prolyl-[hypoxia-inducible factor alpha subunit] + succinate + CO2. Functionally, catalyzes the post-translational formation of 4-hydroxyproline in hypoxia-inducible factor (HIF) alpha proteins. Hydroxylates HIF1A at 'Pro-402' and 'Pro-564'. May function as a cellular oxygen sensor and, under normoxic conditions, may target HIF through the hydroxylation for proteasomal degradation via the von Hippel-Lindau ubiquitination complex. The sequence is that of Transmembrane prolyl 4-hydroxylase (P4htm) from Mus musculus (Mouse).